The chain runs to 988 residues: Putative disease resistance protein RGA4 (988 aa).

Residues 137–439 enclose the NB-ARC domain; the sequence is AAAATRETGF…MAHGFLLSKG (303 aa). 184 to 191 is an ATP binding site; sequence GMGGLGKT. LRR repeat units follow at residues 526-548, 549-572, 574-595, 596-620, 638-662, 674-696, 751-776, 784-808, 829-851, 852-876, 878-900, 901-925, 927-950, and 966-988; these read FVSL…SIGD, LLHL…LCKL, NLQT…QTSK, LSSL…GLLT, LGEL…KNDT, LQSL…EVKV, LPCL…DVHS, FPSL…EGEE, LSSV…SISN, LSTL…MFTS, TNLE…SLTS, LNAL…GLEG, TSLT…LQHL, and KRCD…LDIH.

It belongs to the disease resistance NB-LRR family.

Functionally, disease resistance protein. Resistance proteins guard the plant against pathogens that contain an appropriate avirulence protein via a direct or indirect interaction with this avirulence protein. That triggers a defense system which restricts the pathogen growth. In Solanum bulbocastanum (Wild potato), this protein is Putative disease resistance protein RGA4 (RGA4).